A 130-amino-acid polypeptide reads, in one-letter code: Small ribosomal subunit protein uS9 (130 aa).

The segment at 109–130 (RAKERKKYGLKAARRAPQFSKR) is disordered. Residues 111–130 (KERKKYGLKAARRAPQFSKR) are compositionally biased toward basic residues.

This sequence belongs to the universal ribosomal protein uS9 family.

The protein is Small ribosomal subunit protein uS9 of Heliobacterium modesticaldum (strain ATCC 51547 / Ice1).